A 262-amino-acid chain; its full sequence is Pyridoxine 5'-phosphate synthase (262 aa).

A 3-amino-2-oxopropyl phosphate-binding site is contributed by asparagine 6. 8 to 9 provides a ligand contact to 1-deoxy-D-xylulose 5-phosphate; sequence DH. Arginine 17 contacts 3-amino-2-oxopropyl phosphate. The Proton acceptor role is filled by histidine 43. 1-deoxy-D-xylulose 5-phosphate contacts are provided by arginine 45 and histidine 50. The Proton acceptor role is filled by glutamate 70. A 1-deoxy-D-xylulose 5-phosphate-binding site is contributed by threonine 102. Histidine 215 (proton donor) is an active-site residue. 3-amino-2-oxopropyl phosphate-binding positions include glycine 216 and 237–238; that span reads GH.

This sequence belongs to the PNP synthase family. In terms of assembly, homooctamer; tetramer of dimers.

The protein resides in the cytoplasm. The enzyme catalyses 3-amino-2-oxopropyl phosphate + 1-deoxy-D-xylulose 5-phosphate = pyridoxine 5'-phosphate + phosphate + 2 H2O + H(+). The protein operates within cofactor biosynthesis; pyridoxine 5'-phosphate biosynthesis; pyridoxine 5'-phosphate from D-erythrose 4-phosphate: step 5/5. In terms of biological role, catalyzes the complicated ring closure reaction between the two acyclic compounds 1-deoxy-D-xylulose-5-phosphate (DXP) and 3-amino-2-oxopropyl phosphate (1-amino-acetone-3-phosphate or AAP) to form pyridoxine 5'-phosphate (PNP) and inorganic phosphate. In Helicobacter pylori (strain ATCC 700392 / 26695) (Campylobacter pylori), this protein is Pyridoxine 5'-phosphate synthase.